Here is a 103-residue protein sequence, read N- to C-terminus: Large ribosomal subunit protein bL21 (103 aa).

It belongs to the bacterial ribosomal protein bL21 family. Part of the 50S ribosomal subunit. Contacts protein L20.

In terms of biological role, this protein binds to 23S rRNA in the presence of protein L20. This chain is Large ribosomal subunit protein bL21, found in Saccharophagus degradans (strain 2-40 / ATCC 43961 / DSM 17024).